The sequence spans 466 residues: MSVVPVVDVLQGRAAVDSEVTVRGWVRTRRDSKAGISFVAVYDGSCFDPLQAVVNNTLPNYQDEVLHLTTGCSVEVTGTVVASPGEGQSFEIQATAIKVVGWVDDPDTYPMAAKRHSIEYLREVAHLRPRTNLIGAVARVRHTLAQAIHRFFDENGYFWVSTPLITASDTEGAGEMFRVSTLDLENLPRTDTGAVDFSEDFFGKEAFLTVSGQLNGETYACALSKVYTFGPTFRAENSNTSRHLAEFWMVEPEVAFASLDDVAGLAEKMLKYVFQAVLNERADDMKFFAERVDKDAVDRLQRFVTSDFAQVDYTDAIEILLASGQKFENDVSWGIDLSSEHERYLAEQHFKAPVVVKNYPKDIKAFYMRMNEDGKTVAAMDVLAPGIGEIIGGSQREERLDVLDARLAEMGLNKEDYWWYRDLRRYGTVPHSGFGLGFERLISYVTGVQNVRDVIPFPRTPRNASF.

The protein belongs to the class-II aminoacyl-tRNA synthetase family. As to quaternary structure, homodimer.

It localises to the cytoplasm. The catalysed reaction is tRNA(Asn) + L-asparagine + ATP = L-asparaginyl-tRNA(Asn) + AMP + diphosphate + H(+). This is Asparagine--tRNA ligase from Yersinia enterocolitica serotype O:8 / biotype 1B (strain NCTC 13174 / 8081).